The chain runs to 226 residues: Transmembrane protein 204 (226 aa).

Residues 1–5 (MTVRK) are Cytoplasmic-facing. A helical transmembrane segment spans residues 6-26 (VVATAVLVALVSLVLNNAAAF). Residues 27–103 (TPNWVYQTLE…LQFDMMRACN (77 aa)) are Extracellular-facing. Residues 104–124 (LVATAALAAGQLTFVLGLTGL) traverse the membrane as a helical segment. Residues 125–136 (PLLSPDAQCWEE) are Cytoplasmic-facing. A helical transmembrane segment spans residues 137–157 (AMAAAFQLASFVLVIGLVTFY). Residues 158 to 170 (RIGPYTSLSWSCY) lie on the Extracellular side of the membrane. A helical transmembrane segment spans residues 171–191 (LNIGACLLATLAAAMLIWNVL). At 192–226 (HRREDCTAPRVIVISRSLTARFRRGLDNDYVESPC) the chain is on the cytoplasmic side.

It is found in the cell junction. The protein resides in the adherens junction. The protein localises to the cell membrane. Functionally, can influence paracellular permeability. Appears to be involved in cell-cell interactions through adherens. In Bos taurus (Bovine), this protein is Transmembrane protein 204 (TMEM204).